Reading from the N-terminus, the 291-residue chain is tRNA dimethylallyltransferase (291 aa).

9–16 (GTTASGKT) contacts ATP. 11 to 16 (TASGKT) provides a ligand contact to substrate. An interaction with substrate tRNA region spans residues 34 to 37 (DSLC).

This sequence belongs to the IPP transferase family. As to quaternary structure, monomer. Mg(2+) is required as a cofactor.

The catalysed reaction is adenosine(37) in tRNA + dimethylallyl diphosphate = N(6)-dimethylallyladenosine(37) in tRNA + diphosphate. Catalyzes the transfer of a dimethylallyl group onto the adenine at position 37 in tRNAs that read codons beginning with uridine, leading to the formation of N6-(dimethylallyl)adenosine (i(6)A). The sequence is that of tRNA dimethylallyltransferase from Campylobacter lari (strain RM2100 / D67 / ATCC BAA-1060).